A 337-amino-acid chain; its full sequence is Glyceraldehyde-3-phosphate dehydrogenase (337 aa).

NAD(+) is bound by residues 11-12 (TI) and Gly111. Residue 140-142 (SCN) participates in D-glyceraldehyde 3-phosphate binding. Cys141 serves as the catalytic Nucleophile. Arg169 contacts NAD(+). Residues 177–196 (KKGPINSIVPTTEVPSHHGP) form a disordered region. 194-195 (HG) contacts D-glyceraldehyde 3-phosphate. Gln301 lines the NAD(+) pocket.

Belongs to the glyceraldehyde-3-phosphate dehydrogenase family. As to quaternary structure, homotetramer.

Its subcellular location is the cytoplasm. The catalysed reaction is D-glyceraldehyde 3-phosphate + phosphate + NADP(+) = (2R)-3-phospho-glyceroyl phosphate + NADPH + H(+). It carries out the reaction D-glyceraldehyde 3-phosphate + phosphate + NAD(+) = (2R)-3-phospho-glyceroyl phosphate + NADH + H(+). It participates in carbohydrate degradation; glycolysis; pyruvate from D-glyceraldehyde 3-phosphate: step 1/5. This is Glyceraldehyde-3-phosphate dehydrogenase from Methanosphaera stadtmanae (strain ATCC 43021 / DSM 3091 / JCM 11832 / MCB-3).